Here is a 317-residue protein sequence, read N- to C-terminus: Taste receptor type 2 member 14 (317 aa).

Over 1 to 7 (MGGVIKS) the chain is Extracellular. The chain crosses the membrane as a helical span at residues 8–28 (IFTFVLIVEFIIGNLGNSFIA). Over 29–55 (LVNCIDWVKGRKISSVDRILTALAISK) the chain is Cytoplasmic. The chain crosses the membrane as a helical span at residues 56–76 (ISLVWLIFGSWCVSVFFPALF). Over 77-87 (ATEKMFRMLTN) the chain is Extracellular. Cholesterol is bound by residues T86 and W89. Residues 88–108 (IWTVINHFSVWLATGLGTFYF) form a helical membrane-spanning segment. Topologically, residues 109-129 (LKIANFSNSIFLYLKWRVKKV) are cytoplasmic. A helical membrane pass occupies residues 130–150 (VLVLLLVTSVFLFLNIALINI). Topologically, residues 151–184 (HINASINGYRRNKTCSSDSSNFTRFSSLIVLTST) are extracellular. N153, N162, and N171 each carry an N-linked (GlcNAc...) asparagine glycan. A cholesterol-binding site is contributed by V180. Residues 185–205 (VFIFIPFTLSLAMFLLLIFSM) traverse the membrane as a helical segment. Residues 206–232 (WKHRKKMQHTVKRSGDASTKAHRGVKS) lie on the Cytoplasmic side of the membrane. Residues 233 to 253 (MMTFFLLYAIFSLSFFISVWT) form a helical membrane-spanning segment. Topologically, residues 254–261 (SERLEENL) are extracellular. The chain crosses the membrane as a helical span at residues 262–282 (IILSQVMGMAYPSCHSCVLIL). 2 residues coordinate cholesterol: S265 and M268. Over 283 to 317 (GNKKLRQASLSVLLWLRYMFKDGEPSGHKEFRESS) the chain is Cytoplasmic.

It belongs to the G-protein coupled receptor T2R family. As to quaternary structure, core component of the TAS2R14-GNAI1 complex, consisting of TAS2R14, GNAI1, GNB1 and GNG2; within the complex interacts with GNAI1. Core component of the TAS2R14-GNAT3 complex, consisting of TAS2R14, GNAT3, GNB1 and GNG2; within the complex interacts with GNAT3. Core component of the TAS2R14-GNAS2 complex, consisting of TAS2R14, GNAS2, GNB1 and GNG2; within the complex interacts with GNAS2.

Its subcellular location is the membrane. The enzyme catalyses Ca(2+)(in) = Ca(2+)(out). It catalyses the reaction 3',5'-cyclic AMP(in) = 3',5'-cyclic AMP(out). Basal activity is enhanced by binding to bitter tastants, such as flufenamic acid and aristolochic acid. Regulated by cholesterol in a concentration-dependent manner. Gustducin-linked G-protein coupled receptor that plays a role in the perception of bitterness. The activity of this receptor stimulates GNAT3, activating the gustducin G-protein pathway. Likely plays a role in sensing the chemical composition of the gastrointestinal content and other extra-oral tissues via the inhibitory G-protein pathways. The polypeptide is Taste receptor type 2 member 14 (TAS2R14) (Pan paniscus (Pygmy chimpanzee)).